A 336-amino-acid polypeptide reads, in one-letter code: G-protein coupled receptor homolog FPV027 (336 aa).

The Extracellular segment spans residues 1-31 (MSMNNITSKMNQDSYGYFQLHMSDFTRVSLS). Asparagine 5 carries an N-linked (GlcNAc...) asparagine; by host glycan. The helical transmembrane segment at 32–52 (IVFTLVFLVGIIGNAVIIWFI) threads the bilayer. The Cytoplasmic segment spans residues 53–63 (GFKWTKTISTL). Residues 64 to 84 (LFINLALADSLFLIFIPVYTV) traverse the membrane as a helical segment. Topologically, residues 85–101 (YVLSNFHWYLGEFLCRV) are extracellular. A disulfide bond links cysteine 99 and cysteine 178. Residues 102-122 (SSFFFTTNMYASMFLLTFISI) form a helical membrane-spanning segment. Residues 123-143 (DKYLTLTSHRLVYKYRKYRNY) are Cytoplasmic-facing. A helical membrane pass occupies residues 144–164 (YVCIGAIWCISIALGVPTLYY). Residues 165–200 (KRVILSSSRNETRCISYYGDDKHTAITIYRIIVCIR) are Extracellular-facing. Asparagine 174 is a glycosylation site (N-linked (GlcNAc...) asparagine; by host). A helical membrane pass occupies residues 201 to 221 (FIIGYVFPMTVILLSYALIVY). Residues 222-240 (KVKFINKPPNRSFMITTAS) are Cytoplasmic-facing. The helical transmembrane segment at 241–261 (IFVFLACWTPHHVLNIISLYG) threads the bilayer. The Extracellular segment spans residues 262–276 (LKSTSMYNYIKESIP). A helical transmembrane segment spans residues 277-297 (FVNAIAFVYSAINPIIYIFVI). Topologically, residues 298-336 (RLTSTYDSDTMDELRSALLDEETTSTEDCSDIEISDISR) are cytoplasmic.

This sequence belongs to the G-protein coupled receptor 1 family.

It localises to the host cell membrane. The polypeptide is G-protein coupled receptor homolog FPV027 (Vertebrata (FPV)).